The following is a 120-amino-acid chain: Small ribosomal subunit protein uS13 (120 aa).

Residues 92–120 (RRGLPCRGQRTRTNARTRKGPRKPIAGKK) are disordered.

Belongs to the universal ribosomal protein uS13 family. Part of the 30S ribosomal subunit. Forms a loose heterodimer with protein S19. Forms two bridges to the 50S subunit in the 70S ribosome.

Located at the top of the head of the 30S subunit, it contacts several helices of the 16S rRNA. In the 70S ribosome it contacts the 23S rRNA (bridge B1a) and protein L5 of the 50S subunit (bridge B1b), connecting the 2 subunits; these bridges are implicated in subunit movement. Contacts the tRNAs in the A and P-sites. This Laribacter hongkongensis (strain HLHK9) protein is Small ribosomal subunit protein uS13.